The sequence spans 474 residues: Bifunctional protein HldE (474 aa).

A ribokinase region spans residues 1-318; the sequence is MKLSMPRFDQ…RAIQREEGSE (318 aa). 194-197 lines the ATP pocket; it reads NLSE. Residue D263 is part of the active site. The interval 343–474 is cytidylyltransferase; that stretch reads FTNGCFDILH…AIVEKIRKSE (132 aa).

This sequence in the N-terminal section; belongs to the carbohydrate kinase PfkB family. The protein in the C-terminal section; belongs to the cytidylyltransferase family. As to quaternary structure, homodimer.

The catalysed reaction is D-glycero-beta-D-manno-heptose 7-phosphate + ATP = D-glycero-beta-D-manno-heptose 1,7-bisphosphate + ADP + H(+). It carries out the reaction D-glycero-beta-D-manno-heptose 1-phosphate + ATP + H(+) = ADP-D-glycero-beta-D-manno-heptose + diphosphate. It functions in the pathway nucleotide-sugar biosynthesis; ADP-L-glycero-beta-D-manno-heptose biosynthesis; ADP-L-glycero-beta-D-manno-heptose from D-glycero-beta-D-manno-heptose 7-phosphate: step 1/4. It participates in nucleotide-sugar biosynthesis; ADP-L-glycero-beta-D-manno-heptose biosynthesis; ADP-L-glycero-beta-D-manno-heptose from D-glycero-beta-D-manno-heptose 7-phosphate: step 3/4. Its function is as follows. Catalyzes the phosphorylation of D-glycero-D-manno-heptose 7-phosphate at the C-1 position to selectively form D-glycero-beta-D-manno-heptose-1,7-bisphosphate. Functionally, catalyzes the ADP transfer from ATP to D-glycero-beta-D-manno-heptose 1-phosphate, yielding ADP-D-glycero-beta-D-manno-heptose. The sequence is that of Bifunctional protein HldE from Pseudomonas fluorescens (strain Pf0-1).